The chain runs to 256 residues: Chorismate mutase (256 aa).

Residues 3 to 255 (FTKPETVLNL…EVEYLLRRLE (253 aa)) enclose the Chorismate mutase domain. Residues Arg75 and Arg76 each contribute to the L-tyrosine site. L-tryptophan contacts are provided by Asn138, Asn139, Gly141, and Ser142. Positions 139, 141, 142, and 145 each coordinate L-tyrosine.

In terms of assembly, homodimer.

Its subcellular location is the cytoplasm. The catalysed reaction is chorismate = prephenate. It functions in the pathway metabolic intermediate biosynthesis; prephenate biosynthesis; prephenate from chorismate: step 1/1. With respect to regulation, each dimer has two allosteric binding sites that can bind the regulatory effectors tryptophan or tyrosine. Can bind either one tryptophan or one tyrosine, two tryptophan or two tyrosine or one tryptophan and one tyrosine, which differentially affect the catalytic activity. Activated by tryptophan and subject to feedback inhibition by tyrosine. In the presence of both tryptophan and tyrosine, the enzyme is in the activated state. In terms of biological role, catalyzes the Claisen rearrangement of chorismate to prephenate. Acts at the first branch point in the aromatic amino acid pathway where it steers biosynthesis towards phenylalanine and tyrosine, and away from tryptophan. The chain is Chorismate mutase from Saccharomyces cerevisiae (strain ATCC 204508 / S288c) (Baker's yeast).